Here is a 106-residue protein sequence, read N- to C-terminus: MGKMNVRKGDKVVVITGKDAGKRGKIIEAIPDKNKVIVEGVNVVKRHSRPTRKLPQGGIQEKEAPIDSSNVMLLCARCHKPTRVGRRILDDGTKVRVCKKCGEALQ.

The protein belongs to the universal ribosomal protein uL24 family. As to quaternary structure, part of the 50S ribosomal subunit.

Its function is as follows. One of two assembly initiator proteins, it binds directly to the 5'-end of the 23S rRNA, where it nucleates assembly of the 50S subunit. One of the proteins that surrounds the polypeptide exit tunnel on the outside of the subunit. This is Large ribosomal subunit protein uL24 from Desulforudis audaxviator (strain MP104C).